The following is a 198-amino-acid chain: Guanylate kinase (198 aa).

One can recognise a Guanylate kinase-like domain in the interval 8–188 (GRVVVLSGPS…ACSELVSLLV (181 aa)). Residue 15–22 (GPSAVGKS) coordinates ATP.

This sequence belongs to the guanylate kinase family.

The protein resides in the cytoplasm. It catalyses the reaction GMP + ATP = GDP + ADP. Functionally, essential for recycling GMP and indirectly, cGMP. This Mycobacterium sp. (strain MCS) protein is Guanylate kinase.